Reading from the N-terminus, the 450-residue chain is Phosphoglucosamine mutase (450 aa).

Ser102 (phosphoserine intermediate) is an active-site residue. Mg(2+) contacts are provided by Ser102, Asp242, Asp244, and Asp246. Ser102 is subject to Phosphoserine.

Belongs to the phosphohexose mutase family. Mg(2+) is required as a cofactor. Activated by phosphorylation.

The enzyme catalyses alpha-D-glucosamine 1-phosphate = D-glucosamine 6-phosphate. Its function is as follows. Catalyzes the conversion of glucosamine-6-phosphate to glucosamine-1-phosphate. This chain is Phosphoglucosamine mutase, found in Lachnospira eligens (strain ATCC 27750 / DSM 3376 / VPI C15-48 / C15-B4) (Eubacterium eligens).